The following is a 423-amino-acid chain: Aspartate--tRNA(Asp) ligase (423 aa).

L-aspartate is bound at residue E163. An aspartate region spans residues 185–188 (QLYK). An L-aspartate-binding site is contributed by R207. ATP is bound by residues 207–209 (RAE), 215–217 (RHL), and E346. The Mg(2+) site is built by E346 and S349. L-aspartate contacts are provided by S349 and R353. 394-397 (GLER) lines the ATP pocket.

This sequence belongs to the class-II aminoacyl-tRNA synthetase family. Type 2 subfamily. Homodimer. Requires Mg(2+) as cofactor.

The protein localises to the cytoplasm. It catalyses the reaction tRNA(Asp) + L-aspartate + ATP = L-aspartyl-tRNA(Asp) + AMP + diphosphate. Its function is as follows. Catalyzes the attachment of L-aspartate to tRNA(Asp) in a two-step reaction: L-aspartate is first activated by ATP to form Asp-AMP and then transferred to the acceptor end of tRNA(Asp). The sequence is that of Aspartate--tRNA(Asp) ligase from Picrophilus torridus (strain ATCC 700027 / DSM 9790 / JCM 10055 / NBRC 100828 / KAW 2/3).